We begin with the raw amino-acid sequence, 177 residues long: Cytidylate kinase (177 aa).

8 to 16 (GPPGGGKTT) serves as a coordination point for ATP.

Belongs to the cytidylate kinase family. Type 2 subfamily.

The protein localises to the cytoplasm. The catalysed reaction is CMP + ATP = CDP + ADP. It catalyses the reaction dCMP + ATP = dCDP + ADP. The sequence is that of Cytidylate kinase from Staphylothermus marinus (strain ATCC 43588 / DSM 3639 / JCM 9404 / F1).